Consider the following 956-residue polypeptide: MWRAKLRRGTCEPAVKGSPSACYSPSSPVQVLEDSTYFSPDFQLYSGRHETSALTVEATSSIREKVVEDPLCNFHSPNFLRISEVEMRGSEDAAAGTVLQRLIQEQLRYGTPTENMNLLAIQHQATGSAGPAHPTNNFSSTENLTQEDPQMVYQSARQEPQGQEHQVDNTVMEKQVRSTQPQQNNEELPTYEEAKAQSQFFRGQQQQQQQQGAVGHGYYMAGGTSQKSRTEGRPTVNRANSGQAHKDEALKELKQGHVRSLSERIMQLSLERNGAKQHLPGSGNGKGFKVGGGPSPAQPAGKVLDPRGPPPEYPFKTKQMMSPVSKTQEHGLFYGDQHPGMLHEMVKPYPAPQPVRTDVAVLRYQPPPEYGVTSRPCQLPFPSTMQQHSPMSSQTSSASGPLHSVSLPLPLPMALGAPQPPPAASPSQQLGPDAFAIVERAQQMVEILTEENRVLHQELQGYYDNADKLHKFEKELQRISEAYESLVKSTTKRESLDKAMRNKLEGEIRRLHDFNRDLRDRLETANRQLSSREYEGHEDKAAEGHYASQNKEFLKEKEKLEMELAAVRTASEDHRRHIEILDQALSNAQARVIKLEEELREKQAYVEKVEKLQQALTQLQSACEKREQMERRLRTWLERELDALRTQQKHGNGQPANMPEYNAPALLELVREKEERILALEADMTKWEQKYLEESTIRHFAMNAAATAAAERDTTIINHSRNGSYGESSLEAHIWQEEEEVVQANRRCQDMEYTIKNLHAKIIEKDAMIKVLQQRSRKDAGKTDSSSLRPARSVPSIAAATGTHSRQTSLTSSQLAEEKKEEKTWKGSIGLLLGKEHHEHASAPLLPPPPTSALSSIASTTAASSAHAKTGSKDSSTQTDKSAELFWPSMASLPSRGRLSTTPAHSPVLKHPAAKGTAEKLENSPGHGKSPDHRGRVSSLLHKPEFPDGEMMEVLI.

Residues 197-246 form a disordered region; that stretch reads QSQFFRGQQQQQQQQGAVGHGYYMAGGTSQKSRTEGRPTVNRANSGQAHK. Ser241 and Ser269 each carry phosphoserine. Positions 259–279 form a coiled coil; the sequence is RSLSERIMQLSLERNGAKQHL. Disordered regions lie at residues 274-322, 382-405, and 411-430; these read GAKQ…QMMS, PSTMQQHSPMSSQTSSASGPLHSV, and LPMALGAPQPPPAASPSQQL. Residues 282–294 show a composition bias toward gly residues; it reads SGNGKGFKVGGGP. A Phosphoserine modification is found at Ser295. The span at 382–398 shows a compositional bias: polar residues; that stretch reads PSTMQQHSPMSSQTSSA. Coiled coils occupy residues 438–639 and 665–694; these read VERA…WLER and ALLELVREKEERILALEADMTKWEQKYLEE. Ser720 carries the phosphoserine modification. A coiled-coil region spans residues 729-762; it reads SLEAHIWQEEEEVVQANRRCQDMEYTIKNLHAKI. The segment at 773–823 is disordered; sequence QQRSRKDAGKTDSSSLRPARSVPSIAAATGTHSRQTSLTSSQLAEEKKEEK. Phosphoserine occurs at positions 793, 805, and 828. Residues 802–815 are compositionally biased toward polar residues; it reads GTHSRQTSLTSSQL. Disordered regions lie at residues 841–880 and 894–944; these read ASAPLLPPPPTSALSSIASTTAASSAHAKTGSKDSSTQTD and PSRG…LHKP. Residues 852–866 are compositionally biased toward low complexity; the sequence is SALSSIASTTAASSA. Ser900 is modified (phosphoserine). Thr902 is subject to Phosphothreonine. Ser906 is modified (phosphoserine). Residues 953–956 carry the PDZ-binding motif; the sequence is EVLI.

It belongs to the angiomotin family. Polyubiquitinated by NEDD4, leading to proteasomal degradation.

It localises to the cell junction. Its subcellular location is the tight junction. In terms of biological role, inhibits the Wnt/beta-catenin signaling pathway, probably by recruiting CTNNB1 to recycling endosomes and hence preventing its translocation to the nucleus. The protein is Angiomotin-like protein 1 (AMOTL1) of Homo sapiens (Human).